The sequence spans 665 residues: non-specific serine/threonine protein kinase (665 aa).

A Protein kinase domain is found at 145–597 (FDVHCRIGSG…AEEALKHPFF (453 aa)). ATP-binding positions include 151–159 (IGSGTFSTV) and K181. The active-site Proton acceptor is D268.

This sequence belongs to the protein kinase superfamily. Ser/Thr protein kinase family. In terms of assembly, interacts with chif (via N-terminus).

It carries out the reaction L-seryl-[protein] + ATP = O-phospho-L-seryl-[protein] + ADP + H(+). It catalyses the reaction L-threonyl-[protein] + ATP = O-phospho-L-threonyl-[protein] + ADP + H(+). Functionally, probable serine/threonine protein kinase that forms a complex with the N-terminal peptide of the chiffon protein and may be involved in regulating meiotic processes in the male testis. The protein is non-specific serine/threonine protein kinase of Drosophila melanogaster (Fruit fly).